A 1412-amino-acid polypeptide reads, in one-letter code: MKALLDLFKQVQQEEIFDAIKIGLASPDKIRSWSFGEVKKPETINYRTFKPERDGLFCAKIFGPIKDYECLCGKYKRLKHRGVICEKCGVEVTLAKVRRERMGHIELASPVAHIWFLKSLPSRLGMVLDMTLRDIERVLYFEAYVVIDPGMTPLKARQIMTEEDYYNKVEEYGDEFRAEMGAEGVRELLRSINIDEQVETLRTELKNTGSEAKIKKYAKRLKVLEAFQRSGIKPDWMILEVLPVLPPELRPLVPLDGGRFATSDLNDLYRRVINRNNRLKRLLELKAPEIIVRNEKRMLQEAVDSLLDNGRRGKAMTGANKRPLKSLADMIKGKGGRFRQNLLGKRVDYSGRSVIVVGPTLKLHQCGLPKLMALELFKPFIFNKLEVMGVATTIKAAKKEVENQTPVVWDILEEVIREHPVMLNRAPTLHRLGIQAFEPVLIEGKAIQLHPLVCAAFNADFDGDQMAVHVPLSLEAQMEARTLMLASNNVLFPANGDPSIVPSQDIVLGLYYATREAINGKGEGLSFTGVSEVIRAYENKEVELASRVNVRITEMVRNEDTSEGAPQFVPKISLYATTVGRAILSEILPPGLPFSVLNKPLKKKEISRLINTAFRKCGLRATVVFADQLMQSGFRLATRAGISICVDDMLVPTQKEQIVGDAAKKVKEYDRQYMSGLVTAQERYNNVVDIWSATSEAVGKAMMEQLSTEPVVDRDGNETRQESFNSIYMMADSGARGSAVQIRQLAGMRGLMAKPDGSIIETPITANFREGLNVLQYFISTHGARKGLADTALKTANSGYLTRRLVDVTQDLVVVEDDCGTSNGVAMKALVEGGEVVEALRDRILGRVAASDVVNPETQETLYEAGTLLDETAVEDIERLGIDEVRVRTALTCETRYGLCASCYGRDLGRGSLVNVGEAVGVIAAQSIGEPGTQLTMRTFHIGGAASRAAVASSVEAKSNGTVRFTATMRYVTNAKGEQIVISRSGEAMITDDIGRERERHKVPYGATLLQLDGAQIKAGTQLATWDPLTRPIITEYGGTVKFENVEEGVTVAKQIDDVTGLSTLVVIDVKRRGSQASKSVRPQVKLLDANGEEVKIPGTEHAVQIGFQVGALITVKDGQQVQVGEVLARIPTEAQKTRDITGGLPRVAELFEARSPKDAGILAEVTGTTSFGKDTKGKQRLVITDLEGNQHEFLIAKEKQVLVHDAQVVNKGEMIVDGPADPHDILRLQGIEALSRYIVDEVQDVYRLQGVKINDKHIEVIVRQMLRRVQIVDNGDTRFIPGEQVERSDMLDENDRMIAEGKRPATYENILLGITKASLSTDSFISAASFQETTRVLTEAAIMGKRDDLRGLKENVIVGRLIPAGTGLAFHKARKAKEQSDRERFDQIAAEEAFEFGTPSTPAEEPQHPAE.

Zn(2+) is bound by residues C70, C72, C85, and C88. D460, D462, and D464 together coordinate Mg(2+). Positions 819, 893, 900, and 903 each coordinate Zn(2+). Residues 1392-1412 (EEAFEFGTPSTPAEEPQHPAE) are disordered.

This sequence belongs to the RNA polymerase beta' chain family. In terms of assembly, the RNAP catalytic core consists of 2 alpha, 1 beta, 1 beta' and 1 omega subunit. When a sigma factor is associated with the core the holoenzyme is formed, which can initiate transcription. Mg(2+) is required as a cofactor. Zn(2+) serves as cofactor.

The enzyme catalyses RNA(n) + a ribonucleoside 5'-triphosphate = RNA(n+1) + diphosphate. In terms of biological role, DNA-dependent RNA polymerase catalyzes the transcription of DNA into RNA using the four ribonucleoside triphosphates as substrates. The protein is DNA-directed RNA polymerase subunit beta' of Burkholderia thailandensis (strain ATCC 700388 / DSM 13276 / CCUG 48851 / CIP 106301 / E264).